Reading from the N-terminus, the 1019-residue chain is Clotting factor C (1019 aa).

The first 25 residues, 1 to 25, serve as a signal peptide directing secretion; that stretch reads MVLASFLVSGLVLGILAQQMRPVQS. The EGF-like domain occupies 102-137; sequence YGTWCSGECQCKNGGICDQRTGACTCRDRYEGAHCE. Disulfide bonds link Cys110-Cys118, Cys112-Cys125, Cys127-Cys136, Cys142-Cys182, Cys168-Cys195, Cys199-Cys241, Cys227-Cys254, Cys260-Cys308, Cys294-Cys321, Cys331-Cys350, Cys354-Cys374, Cys464-Cys564, Cys538-Cys556, Cys576-Cys621, Cys607-Cys634, and Cys720-Cys748. Sushi domains lie at 140-197, 198-256, and 258-323; these read KGCP…KCIR, ECAK…QCKK, and VFCP…SCVK. Residues 325 to 421 enclose the LCCL domain; that stretch reads ADREVDCDSK…EELKSLARSF (97 aa). The region spanning 436–568 is the C-type lectin domain; that stretch reads CPDGWFEVEE…PSSFACMMDL (133 aa). Residues Asn523 and Asn534 are each glycosylated (N-linked (GlcNAc...) asparagine). 2 consecutive Sushi domains span residues 574-636 and 689-750; these read AKCD…RCIK and PRSS…SCIP. 3 N-linked (GlcNAc...) asparagine glycosylation sites follow: Asn624, Asn740, and Asn767. Residues 763–1019 enclose the Peptidase S1 domain; the sequence is IWNGNSTEIG…VFLSWIRQFI (257 aa). Cys794 and Cys810 are disulfide-bonded. Residues His809 and Asp865 each act as charge relay system in the active site. The N-linked (GlcNAc...) asparagine glycan is linked to Asn912. A disulfide bond links Cys932 and Cys951. Asp960 contributes to the substrate binding site. An intrachain disulfide couples Cys962 to Cys996. The active-site Charge relay system is Ser966.

This sequence belongs to the peptidase S1 family. In terms of assembly, heterodimer of a light chain and a heavy chain linked by a disulfide bond. Forms a covalent heterodimer with intracellular coagulation inhibitor 1/LICI-1. Forms a covalent heterodimer with intracellular coagulation inhibitor 2/LICI-2. In terms of processing, N-glycosylated. Post-translationally, lipopolysaccharide (LPS) activates clotting factor C by inducing the proteolytic cleavage of the clotting factor C light chain into clotting factor C chains A and B. Clotting factor C chains heavy, A and B remain associated via interchain disulfide bonds. In terms of tissue distribution, expressed in hemocytes (at protein level).

The protein localises to the secreted. The enzyme catalyses Selective cleavage of 103-Arg-|-Ser-104 and 124-Ile-|-Ile-125 bonds in Limulus clotting factor B to form activated factor B. Cleavage of -Pro-Arg-|-Xaa- bonds in synthetic substrates.. With respect to regulation, activated by Gram-negative bacterial lipopolysaccharides. Inhibited by intracellular coagulation inhibitor 1/LICI-1 and to a lesser extent by intracellular coagulation inhibitors 2/LICI-2 and 3/LICI-3. Inhibited by the small molecule diisopropyl fluorophosphate (DFP). In terms of biological role, this enzyme is closely associated with an endotoxin-sensitive hemolymph coagulation system which may play important roles in both hemostasis and host defense mechanisms. Its active form catalyzes the activation of clotting factor B. The sequence is that of Clotting factor C from Tachypleus tridentatus (Japanese horseshoe crab).